The primary structure comprises 131 residues: Profilin-6 (131 aa).

Residues Cys-13 and Cys-115 are joined by a disulfide bond. The Involved in PIP2 interaction motif lies at 81 to 97 (AVIRGKKGAGGITIKKT). A Phosphothreonine modification is found at Thr-111.

The protein belongs to the profilin family. As to quaternary structure, occurs in many kinds of cells as a complex with monomeric actin in a 1:1 ratio. In terms of processing, phosphorylated by MAP kinases.

Its subcellular location is the cytoplasm. It localises to the cytoskeleton. Binds to actin and affects the structure of the cytoskeleton. At high concentrations, profilin prevents the polymerization of actin, whereas it enhances it at low concentrations. The polypeptide is Profilin-6 (Phleum pratense (Common timothy)).